A 436-amino-acid polypeptide reads, in one-letter code: T-box transcription factor TBX6 (436 aa).

A DNA-binding region (T-box) is located at residues 100 to 273; it reads LWKEFSAVGT…ANPFAKGFRE (174 aa). A compositionally biased stretch (basic and acidic residues) spans 274–284; sequence NGRNCKRERDA. Disordered stretches follow at residues 274–344 and 360–383; these read NGRN…CGGP and PSHLPARTPSFAEAPDPGRPAPYS. Residues 332–344 are compositionally biased toward low complexity; sequence EAASASAPPCGGP.

The protein localises to the nucleus. Functionally, T-box transcription factor that plays an essential role in the determination of the fate of axial stem cells: neural vs mesodermal. Acts in part by down-regulating, a specific enhancer (N1) of SOX2, to inhibit neural development. Seems to play also an essential role in left/right axis determination and acts through effects on Notch signaling around the node as well as through an effect on the morphology and motility of the nodal cilia. This chain is T-box transcription factor TBX6 (Tbx6), found in Mus musculus (Mouse).